Reading from the N-terminus, the 672-residue chain is Glycine--tRNA ligase beta subunit (672 aa).

The protein belongs to the class-II aminoacyl-tRNA synthetase family. As to quaternary structure, tetramer of two alpha and two beta subunits.

Its subcellular location is the cytoplasm. The catalysed reaction is tRNA(Gly) + glycine + ATP = glycyl-tRNA(Gly) + AMP + diphosphate. This chain is Glycine--tRNA ligase beta subunit (glyS), found in Thermotoga maritima (strain ATCC 43589 / DSM 3109 / JCM 10099 / NBRC 100826 / MSB8).